Here is a 245-residue protein sequence, read N- to C-terminus: Putative protein phosphatase 2C-like protein 45 (245 aa).

The PPM-type phosphatase domain maps to 1-188; the sequence is MEDRFSTITN…DDISVMLIPL (188 aa).

The protein belongs to the PP2C family.

The polypeptide is Putative protein phosphatase 2C-like protein 45 (Arabidopsis thaliana (Mouse-ear cress)).